The chain runs to 102 residues: MNNYIKALLIIICFSSCSISDKNKYNLDVLEATHLNKNILNRNYVGMTRQQIVYIFGIPIISDSFDDIYHYYLSDSKNNNVYPKKMLNLYFKDNKVFKFNMT.

The N-terminal stretch at 1-20 (MNNYIKALLIIICFSSCSIS) is a signal peptide.

It belongs to the BamE family. Part of the Bam complex.

The protein resides in the cell outer membrane. In terms of biological role, part of the outer membrane protein assembly complex, which is involved in assembly and insertion of beta-barrel proteins into the outer membrane. This Buchnera aphidicola subsp. Acyrthosiphon pisum (strain APS) (Acyrthosiphon pisum symbiotic bacterium) protein is Outer membrane protein assembly factor BamE.